Reading from the N-terminus, the 541-residue chain is Pseudokinase FAM20A (541 aa).

The signal sequence occupies residues 1 to 33; that stretch reads MPGLRRDRLLALLLLGALFSADLYFHLWPQVQR. N-linked (GlcNAc...) asparagine glycans are attached at residues Asn-70, Asn-145, and Asn-287. Disulfide bonds link Cys-314/Cys-330, Cys-319/Cys-323, Cys-378/Cys-452, and Cys-453/Cys-512. Asn-388 is a glycosylation site (N-linked (GlcNAc...) asparagine). Asn-538 carries N-linked (GlcNAc...) asparagine glycosylation.

Belongs to the FAM20 family. Interacts with FAM20C; probably forming a heterotetramer of 2 subunits of FAM20A and 2 subunits of FAM20C. Post-translationally, N-glycosylated. As to expression, in the mammary gland, expressed at higher levels in lactating mice than in virgin mice. Observed throughout the tissues of the mandibular incisor, including the secretory and maturation stage ameloblasts, the suprabasal layers of the gingival epithelium and the odontoblasts. Weak expression in the enamel matrix.

The protein resides in the secreted. The protein localises to the golgi apparatus. Its subcellular location is the endoplasmic reticulum. In terms of biological role, pseudokinase that acts as an allosteric activator of the Golgi serine/threonine protein kinase FAM20C and is involved in biomineralization of teeth. Forms a complex with FAM20C and increases the ability of FAM20C to phosphorylate the proteins that form the 'matrix' that guides the deposition of the enamel minerals. This Mus musculus (Mouse) protein is Pseudokinase FAM20A.